The following is a 123-amino-acid chain: MANTQLKSDAIMDMMKEHLSTDAGKEVTEKIGLVYQINIAPKKLGFEEVTYIVDLKKGEVTKGKYEGGKVDATFSFKDDDFVKVATGKMNPQMAFIRGAMKIKGSLSAAQKFTPDIFPKPSKL.

One can recognise an SCP2 domain in the interval 16–113 (KEHLSTDAGK…GSLSAAQKFT (98 aa)). The Microbody targeting signal signature appears at 121 to 123 (SKL).

Expressed in most tissues including seedlings, cotyledons, inflorescence, leaves, stems, roots, siliques and flower buds, with the highest levels in floral tissues and in maturing seeds.

Its subcellular location is the peroxisome. Its function is as follows. Enhances the transfer of lipids between membranes in vitro. Active on phosphatidylcholine (PC), 1-palmitoyl 2-oleoyl phosphatidylcholine (POPC) and ergosterol, and, to a lower extent, dimyristoyl phosphatidic acid, stigmasterol, desmosterol, beta-sitosterol and steryl glucoside. Inactive or poorly active on palmitic acid, stearoyl-coenzyme A, cholesterol, glucosylceramide and ceramide. Required during seeds and seedlings development. The protein is Sterol carrier protein 2 of Arabidopsis thaliana (Mouse-ear cress).